The sequence spans 548 residues: Chaperonin GroEL (548 aa).

Residues 29–32, K50, 86–90, G416, and D497 each bind ATP; these read TLGP and DGTTT.

This sequence belongs to the chaperonin (HSP60) family. Forms a cylinder of 14 subunits composed of two heptameric rings stacked back-to-back. Interacts with the co-chaperonin GroES.

It localises to the cytoplasm. The enzyme catalyses ATP + H2O + a folded polypeptide = ADP + phosphate + an unfolded polypeptide.. Together with its co-chaperonin GroES, plays an essential role in assisting protein folding. The GroEL-GroES system forms a nano-cage that allows encapsulation of the non-native substrate proteins and provides a physical environment optimized to promote and accelerate protein folding. This Neorickettsia risticii (Ehrlichia risticii) protein is Chaperonin GroEL.